The following is an 876-amino-acid chain: Alanine--tRNA ligase (876 aa).

Lysine 74 carries the post-translational modification N6-acetyllysine. Residues histidine 564, histidine 568, cysteine 666, and histidine 670 each coordinate Zn(2+).

This sequence belongs to the class-II aminoacyl-tRNA synthetase family. In terms of assembly, homotetramer. Zn(2+) is required as a cofactor.

Its subcellular location is the cytoplasm. It carries out the reaction tRNA(Ala) + L-alanine + ATP = L-alanyl-tRNA(Ala) + AMP + diphosphate. Its function is as follows. Catalyzes the attachment of alanine to tRNA(Ala) in a two-step reaction: alanine is first activated by ATP to form Ala-AMP and then transferred to the acceptor end of tRNA(Ala). Also edits incorrectly charged Ser-tRNA(Ala) and Gly-tRNA(Ala) via its editing domain. This is Alanine--tRNA ligase from Escherichia coli (strain ATCC 8739 / DSM 1576 / NBRC 3972 / NCIMB 8545 / WDCM 00012 / Crooks).